A 237-amino-acid chain; its full sequence is Large ribosomal subunit protein uL1 (237 aa).

Belongs to the universal ribosomal protein uL1 family. Part of the 50S ribosomal subunit.

Binds directly to 23S rRNA. The L1 stalk is quite mobile in the ribosome, and is involved in E site tRNA release. Functionally, protein L1 is also a translational repressor protein, it controls the translation of the L11 operon by binding to its mRNA. In Chloroflexus aggregans (strain MD-66 / DSM 9485), this protein is Large ribosomal subunit protein uL1.